Here is a 604-residue protein sequence, read N- to C-terminus: Sulfite reductase [NADPH] flavoprotein alpha-component (604 aa).

The Flavodoxin-like domain maps to V66 to A204. FMN contacts are provided by residues S72–A77, S119–G122, and L155–C164. The FAD-binding FR-type domain maps to A239–P453. Residues T327, Q361, R391 to S394, T409 to G411, and G424 to S427 contribute to the FAD site. Residues S524 to R525, K530 to Q534, and D566 contribute to the NADP(+) site. Position 604 (Y604) interacts with FAD.

Belongs to the NADPH-dependent sulphite reductase flavoprotein subunit CysJ family. The protein in the N-terminal section; belongs to the flavodoxin family. It in the C-terminal section; belongs to the flavoprotein pyridine nucleotide cytochrome reductase family. Alpha(8)-beta(8). The alpha component is a flavoprotein, the beta component is a hemoprotein. FAD serves as cofactor. It depends on FMN as a cofactor.

It catalyses the reaction hydrogen sulfide + 3 NADP(+) + 3 H2O = sulfite + 3 NADPH + 4 H(+). Its pathway is sulfur metabolism; hydrogen sulfide biosynthesis; hydrogen sulfide from sulfite (NADPH route): step 1/1. Functionally, component of the sulfite reductase complex that catalyzes the 6-electron reduction of sulfite to sulfide. This is one of several activities required for the biosynthesis of L-cysteine from sulfate. The flavoprotein component catalyzes the electron flow from NADPH -&gt; FAD -&gt; FMN to the hemoprotein component. This chain is Sulfite reductase [NADPH] flavoprotein alpha-component, found in Neisseria meningitidis serogroup B (strain ATCC BAA-335 / MC58).